The sequence spans 136 residues: Large-conductance mechanosensitive channel (136 aa).

2 helical membrane-spanning segments follow: residues 10–30 (FAMR…AAFG) and 76–96 (GVFI…FMAI).

Belongs to the MscL family. Homopentamer.

It localises to the cell inner membrane. Functionally, channel that opens in response to stretch forces in the membrane lipid bilayer. May participate in the regulation of osmotic pressure changes within the cell. The protein is Large-conductance mechanosensitive channel of Shigella boydii serotype 18 (strain CDC 3083-94 / BS512).